The chain runs to 401 residues: Mu-type opioid receptor (401 aa).

The Extracellular portion of the chain corresponds to 1-69; it reads MDSSADPRNA…CPPTGSPSMV (69 aa). 5 N-linked (GlcNAc...) asparagine glycosylation sites follow: Asn-9, Asn-12, Asn-34, Asn-41, and Asn-49. The chain crosses the membrane as a helical span at residues 70 to 94; it reads TAITIMALYSIVCVVGLFGNFLVMY. At 95–107 the chain is on the cytoplasmic side; sequence VIVRYTKMKTATN. Residues 108-132 form a helical membrane-spanning segment; the sequence is IYIFNLALADALATSTLPFQSVNYL. Topologically, residues 133 to 143 are extracellular; it reads MGTWPFGTILC. Cys-143 and Cys-220 are oxidised to a cystine. Residues 144-166 traverse the membrane as a helical segment; that stretch reads KIVISIDYYNMFTSIFTLCTMSV. At 167 to 186 the chain is on the cytoplasmic side; the sequence is DRYIAVCHPVKALDFRTPRN. Tyr-169 bears the Phosphotyrosine mark. The chain crosses the membrane as a helical span at residues 187–208; sequence AKIINVCNWILSSAIGLPVMFM. The Extracellular segment spans residues 209–231; sequence ATTKYRNGSIDCALTFSHPTWYW. Residues 232–256 traverse the membrane as a helical segment; sequence ENLLKICVFIFAFIMPVLIITVCYG. Residues 257–280 are Cytoplasmic-facing; that stretch reads LMILRLKSVRMLSGSKEKDRNLRR. The chain crosses the membrane as a helical span at residues 281-307; sequence ITRMVLVVVAVFIVCWTPIHIYVIIKA. Residues 308–315 are Extracellular-facing; that stretch reads LITIPETT. The chain crosses the membrane as a helical span at residues 316 to 339; sequence FQTVSWHFCIALGYTNSCLNPVLY. The NPxxY; plays a role in stabilizing the activated conformation of the receptor signature appears at 335–339; sequence NPVLY. Over 340 to 401 the chain is Cytoplasmic; it reads AFLDENFKRC…NLEAETAPLP (62 aa). Cys-354 is lipidated: S-palmitoyl cysteine. The disordered stretch occupies residues 365–385; it reads NSARIRQNTRDHPSTANTVDR. Ser-366 bears the Phosphoserine mark. Thr-373 carries the post-translational modification Phosphothreonine. Phosphoserine is present on Ser-378. The residue at position 397 (Thr-397) is a Phosphothreonine.

This sequence belongs to the G-protein coupled receptor 1 family. In terms of assembly, forms homooligomers and heterooligomers with other GPCRs, such as OPRD1, OPRK1, OPRL1, NPFFR2, ADRA2A, SSTR2, CNR1 and CCR5 (probably in dimeric forms). Interacts with heterotrimeric G proteins; interaction with a heterotrimeric complex containing GNAI1, GNB1 and GNG2 stabilizes the active conformation of the receptor and increases its affinity for endomorphin-2, the synthetic opioid peptide DAMGO and for morphinan agonists. Interacts with PPL; the interaction disrupts agonist-mediated G-protein activation. Interacts (via C-terminus) with DNAJB4 (via C-terminus). Interacts with calmodulin; the interaction inhibits the constitutive activity of OPRM1; it abolishes basal and attenuates agonist-stimulated G-protein coupling. Interacts with FLNA, PLD2, RANBP9 and WLS and GPM6A. Interacts with RTP4. Interacts with SYP and GNAS. Interacts with RGS9, RGS17, RGS20, RGS4, PPP1R9B and HINT1. Post-translationally, phosphorylated. Differentially phosphorylated in basal and agonist-induced conditions. Agonist-mediated phosphorylation modulates receptor internalization. Phosphorylated by GRK2 in a agonist-dependent manner. Phosphorylation at Tyr-169 requires receptor activation, is dependent on non-receptor protein tyrosine kinase Src and results in a decrease in agonist efficacy by reducing G-protein coupling efficiency. Phosphorylated on tyrosine residues; the phosphorylation is involved in agonist-induced G-protein-independent receptor down-regulation. Phosphorylation at Ser-378 is involved in G-protein-dependent but not beta-arrestin-dependent activation of the ERK pathway. Ubiquitinated. A basal ubiquitination seems not to be related to degradation. Ubiquitination is increased upon formation of OPRM1:OPRD1 oligomers leading to proteasomal degradation; the ubiquitination is diminished by RTP4.

It localises to the cell membrane. The protein resides in the cell projection. Its subcellular location is the axon. It is found in the perikaryon. The protein localises to the dendrite. It localises to the endosome. Functionally, receptor for endogenous opioids such as beta-endorphin and endomorphin. Receptor for natural and synthetic opioids including morphine, heroin, DAMGO, fentanyl, etorphine, buprenorphin and methadone. Also activated by enkephalin peptides, such as Met-enkephalin or Met-enkephalin-Arg-Phe, with higher affinity for Met-enkephalin-Arg-Phe. Agonist binding to the receptor induces coupling to an inactive GDP-bound heterotrimeric G-protein complex and subsequent exchange of GDP for GTP in the G-protein alpha subunit leading to dissociation of the G-protein complex with the free GTP-bound G-protein alpha and the G-protein beta-gamma dimer activating downstream cellular effectors. The agonist- and cell type-specific activity is predominantly coupled to pertussis toxin-sensitive G(i) and G(o) G alpha proteins, GNAI1, GNAI2, GNAI3 and GNAO1, and to a lesser extent to pertussis toxin-insensitive G alpha proteins GNAZ and GNA15. They mediate an array of downstream cellular responses, including inhibition of adenylate cyclase activity and both N-type and L-type calcium channels, activation of inward rectifying potassium channels, mitogen-activated protein kinase (MAPK), phospholipase C (PLC), phosphoinositide/protein kinase (PKC), phosphoinositide 3-kinase (PI3K) and regulation of NF-kappa-B. Also couples to adenylate cyclase stimulatory G alpha proteins. The selective temporal coupling to G-proteins and subsequent signaling can be regulated by RGSZ proteins, such as RGS9, RGS17 and RGS4. Phosphorylation by members of the GPRK subfamily of Ser/Thr protein kinases and association with beta-arrestins is involved in short-term receptor desensitization. Beta-arrestins associate with the GPRK-phosphorylated receptor and uncouple it from the G-protein thus terminating signal transduction. The phosphorylated receptor is internalized through endocytosis via clathrin-coated pits which involves beta-arrestins. The activation of the ERK pathway occurs either in a G-protein-dependent or a beta-arrestin-dependent manner and is regulated by agonist-specific receptor phosphorylation. Acts as a class A G-protein coupled receptor (GPCR) which dissociates from beta-arrestin at or near the plasma membrane and undergoes rapid recycling. Receptor down-regulation pathways are varying with the agonist and occur dependent or independent of G-protein coupling. Endogenous ligands induce rapid desensitization, endocytosis and recycling. Heterooligomerization with other GPCRs can modulate agonist binding, signaling and trafficking properties. Involved in neurogenesis. The protein is Mu-type opioid receptor (OPRM1) of Sus scrofa (Pig).